Consider the following 401-residue polypeptide: MTAELQPEAGALLHTELMSLNVGPQHPSTHGVLRLVVDMDGEYVTRVEPHMGYLHTGFEKTMEHRTYQQNVTYAPRTDYLHSFSHELAYVLSVEKLLGAEVPERANVVRVILHELGRIHSHLVFVGTGLLDLGALTPFFYAFREKEACQDLFEAVCGYRMNQGYFRVGGLARDLPEGWTARVEAFLNQMERGVEEYTTLFAANPIFLDRAKGVGVIPADAALDLGLTGPNLRASGVPLDNRKDHPYCGFEDYDFNVISSPDGDSLARFNMRLLEFSESIKIIRQGLQKLRPGPIKDPNRKISLPPRHELETSMEAVIHHFKLVTEGFHPPLGEAYVPIESARGEVGYYVISDGGSMPYRVKIRAPSFVNLQALEYACVGVQFADLITILATIDPVLGDVDR.

The protein belongs to the complex I 49 kDa subunit family. As to quaternary structure, NDH-1 is composed of 15 different subunits. Subunits NuoB, C, D, E, F, and G constitute the peripheral sector of the complex.

The protein localises to the cell membrane. It catalyses the reaction a quinone + NADH + 5 H(+)(in) = a quinol + NAD(+) + 4 H(+)(out). In terms of biological role, NDH-1 shuttles electrons from NADH, via FMN and iron-sulfur (Fe-S) centers, to quinones in the respiratory chain. The immediate electron acceptor for the enzyme in this species is believed to be a menaquinone. Couples the redox reaction to proton translocation (for every two electrons transferred, four hydrogen ions are translocated across the cytoplasmic membrane), and thus conserves the redox energy in a proton gradient. The chain is NADH-quinone oxidoreductase subunit D from Deinococcus radiodurans (strain ATCC 13939 / DSM 20539 / JCM 16871 / CCUG 27074 / LMG 4051 / NBRC 15346 / NCIMB 9279 / VKM B-1422 / R1).